The following is a 321-amino-acid chain: ATP-dependent 6-phosphofructokinase (321 aa).

Gly-12 is an ATP binding site. 22-26 contacts ADP; the sequence is RGVVR. ATP contacts are provided by residues 73–74 and 103–106; these read RF and GDGS. Asp-104 is a binding site for Mg(2+). 127 to 129 serves as a coordination point for substrate; that stretch reads TID. Residue Asp-129 is the Proton acceptor of the active site. Arg-156 lines the ADP pocket. Substrate contacts are provided by residues Arg-164 and 171–173; that span reads MGR. ADP contacts are provided by residues 187 to 189, Lys-213, and 215 to 217; these read GCE and KRH. Substrate is bound by residues Glu-224, Arg-245, and 251–254; that span reads HTQR.

This sequence belongs to the phosphofructokinase type A (PFKA) family. ATP-dependent PFK group I subfamily. Prokaryotic clade 'B1' sub-subfamily. Homotetramer. Mg(2+) serves as cofactor.

Its subcellular location is the cytoplasm. It carries out the reaction beta-D-fructose 6-phosphate + ATP = beta-D-fructose 1,6-bisphosphate + ADP + H(+). It functions in the pathway carbohydrate degradation; glycolysis; D-glyceraldehyde 3-phosphate and glycerone phosphate from D-glucose: step 3/4. Allosterically activated by ADP and other diphosphonucleosides, and allosterically inhibited by phosphoenolpyruvate. Its function is as follows. Catalyzes the phosphorylation of D-fructose 6-phosphate to fructose 1,6-bisphosphate by ATP, the first committing step of glycolysis. The polypeptide is ATP-dependent 6-phosphofructokinase (Glaesserella parasuis serovar 5 (strain SH0165) (Haemophilus parasuis)).